We begin with the raw amino-acid sequence, 339 residues long: N-acetylornithine carbamoyltransferase (339 aa).

Carbamoyl phosphate is bound by residues 49-52 (SMRT), Trp-77, and Arg-112. Glu-144 is a binding site for N(2)-acetyl-L-ornithine. Residue 148 to 151 (HPCQ) participates in carbamoyl phosphate binding. Residues Lys-252 and Leu-295 each contribute to the N(2)-acetyl-L-ornithine site. 294–295 (CL) lines the carbamoyl phosphate pocket. Position 302 is an N6-carboxylysine (Lys-302). Residue Arg-322 coordinates carbamoyl phosphate.

This sequence belongs to the aspartate/ornithine carbamoyltransferase superfamily. AOTCase family. As to quaternary structure, homotrimer.

Its subcellular location is the cytoplasm. The catalysed reaction is N(2)-acetyl-L-ornithine + carbamoyl phosphate = N(2)-acetyl-L-citrulline + phosphate + H(+). The protein operates within amino-acid biosynthesis; L-arginine biosynthesis. Its activity is regulated as follows. Carboxylation at Lys-302 increases the catalytic activity of the enzyme. Is potently inhibited by N(alpha)-acetyl-N(delta)-phosphonoacetyl-L-ornithine (PALAO). In terms of biological role, catalyzes the transfer of the carbamoyl group from carbamoyl phosphate to the delta-amino group of N(2)-acetyl-L-ornithine to produce N(2)-acetyl-L-citrulline. This is a step in an alternative arginine biosynthesis pathway. The enzyme has no activity with ornithine. This is N-acetylornithine carbamoyltransferase from Xanthomonas campestris pv. campestris (strain ATCC 33913 / DSM 3586 / NCPPB 528 / LMG 568 / P 25).